Consider the following 1418-residue polypeptide: Sterol 3-beta-glucosyltransferase (1418 aa).

Positions 1–16 (MRPFLDDAKRRVDRKL) are enriched in basic and acidic residues. 3 disordered regions span residues 1 to 59 (MRPF…SREG), 83 to 188 (ARFD…RSAT), and 207 to 233 (LKAS…ASVS). Residues 18 to 28 (ASRQSLSTSRL) are compositionally biased toward polar residues. Composition is skewed to basic and acidic residues over residues 35–44 (DRLKDNHDAQ) and 95–105 (SEQRPRKESSV). The segment covering 106 to 115 (RKGTSASANT) has biased composition (polar residues). The span at 116–126 (SSPLDSSQRSS) shows a compositional bias: low complexity. 2 stretches are compositionally biased toward basic and acidic residues: residues 127 to 139 (SRTD…ESGT) and 147 to 166 (TISD…HEPQ). Positions 209–219 (ASSTERSQPSL) are enriched in polar residues. Residues 249–288 (EKVLVEYACSLLQSILLQGYMYVTEGHICFYAYLPKKSTV) form the GRAM 1 domain. The PH domain occupies 289 to 387 (AIKSGYLYKR…WVKALQKVIF (99 aa)). The tract at residues 462–651 (ISSQHLSPQP…DPTKSFSGAP (190 aa)) is disordered. A compositionally biased stretch (polar residues) spans 486–497 (RWSLTSGTSRVL). The span at 508–519 (ASASTSHTSLAH) shows a compositional bias: low complexity. Positions 534–575 (SESILNSFEQGTESSAAWQSMTDAAESASQILNRSDVFQSPT) are enriched in polar residues. The span at 578-598 (GLDRRPSGGERRGRRNSDETA) shows a compositional bias: basic and acidic residues. Residues 599–612 (RSLSTRANVGTGQQ) show a composition bias toward polar residues. Residues 615-633 (ELGRRMDGDTSGREARDST) are compositionally biased toward basic and acidic residues. Over residues 635 to 651 (ESDQYTQDPTKSFSGAP) the composition is skewed to polar residues. The 67-residue stretch at 733–799 (DRFRAHFALP…RDIENVEKEK (67 aa)) folds into the GRAM 2 domain. Positions 920, 921, 923, 1223, 1225, 1238, 1242, 1243, 1262, and 1263 each coordinate UDP-alpha-D-glucose. A disordered region spans residues 1339–1418 (SIASSTPFSP…SGPGRKLSGR (80 aa)). Over residues 1341-1355 (ASSTPFSPTPSAKTT) the composition is skewed to low complexity. A compositionally biased stretch (acidic residues) spans 1358–1379 (QDADDDVEDSEEWTFVGDDTDM). A compositionally biased stretch (basic and acidic residues) spans 1380–1391 (EMSRRLRDRAIS).

Belongs to the glycosyltransferase 28 family.

It localises to the cytoplasm. The protein localises to the preautophagosomal structure membrane. The enzyme catalyses a sterol + UDP-alpha-D-glucose = a sterol 3-beta-D-glucoside + UDP + H(+). It catalyses the reaction ergosterol + UDP-alpha-D-glucose = ergosteryl 3-beta-D-glucoside + UDP + H(+). Functionally, sterol glycosyltransferase responsible for the glycosylation of ergosterol to form ergosterol-glucoside. The chain is Sterol 3-beta-glucosyltransferase from Neosartorya fischeri (strain ATCC 1020 / DSM 3700 / CBS 544.65 / FGSC A1164 / JCM 1740 / NRRL 181 / WB 181) (Aspergillus fischerianus).